We begin with the raw amino-acid sequence, 786 residues long: Ciliated left-right organizer ZP-N domains-containing protein (786 aa).

The N-terminal stretch at 1 to 18 (MWGSVAVVWAICLACIQP) is a signal peptide.

As to expression, expressed specifically by cells of the ciliated left-right organizer.

Functionally, plays a role in left-right patterning process. The protein is Ciliated left-right organizer ZP-N domains-containing protein (Ciroz) of Mus musculus (Mouse).